The sequence spans 452 residues: Glucose-6-phosphate isomerase (452 aa).

Glu-290 acts as the Proton donor in catalysis. Active-site residues include His-311 and Lys-425.

The protein belongs to the GPI family.

Its subcellular location is the cytoplasm. It carries out the reaction alpha-D-glucose 6-phosphate = beta-D-fructose 6-phosphate. The protein operates within carbohydrate biosynthesis; gluconeogenesis. Its pathway is carbohydrate degradation; glycolysis; D-glyceraldehyde 3-phosphate and glycerone phosphate from D-glucose: step 2/4. Catalyzes the reversible isomerization of glucose-6-phosphate to fructose-6-phosphate. This chain is Glucose-6-phosphate isomerase, found in Limosilactobacillus reuteri (strain DSM 20016) (Lactobacillus reuteri).